The sequence spans 288 residues: Ankyrin repeat and SOCS box protein 8 (288 aa).

At Ser17 the chain carries Phosphoserine. ANK repeat units follow at residues 52 to 81 (GTLK…EVNA), 85 to 113 (YNRT…NPNA), 117 to 146 (NRDT…SVNA), and 150 to 179 (NNDT…EVRV). The 54-residue stretch at 235–288 (QLCEKLTVLCSAPGTLKTLARYAVRRSLGLQYLPDAVKGLPLPASLKEYLLLLE) folds into the SOCS box domain.

This sequence belongs to the ankyrin SOCS box (ASB) family. In terms of assembly, interacts with TBK1; this interaction promotes TBK1 proteasomal degradation. Phosphorylated by TBK1. As to expression, highest level of expression in skeletal muscle. Also expressed in heart, brain, placenta, liver, kidney and pancreas.

It localises to the cytoplasm. Its pathway is protein modification; protein ubiquitination. Functionally, may be a substrate-recognition component of a SCF-like ECS (Elongin-Cullin-SOCS-box protein) E3 ubiquitin-protein ligase complex which mediates the ubiquitination and subsequent proteasomal degradation of target proteins. Inhibits IFN-beta production through the IRF3 signaling pathway by targeting TBK1 via 'Lys-48'-linked ubiquitination, leading to its proteasomal degradation. This is Ankyrin repeat and SOCS box protein 8 (ASB8) from Homo sapiens (Human).